The chain runs to 467 residues: Serine decarboxylase 2 (467 aa).

H178 provides a ligand contact to substrate. An N6-(pyridoxal phosphate)lysine modification is found at K290.

It belongs to the group II decarboxylase family. Pyridoxal 5'-phosphate serves as cofactor.

It catalyses the reaction L-serine + H(+) = ethanolamine + CO2. Functionally, catalyzes the biosynthesis of ethanolamine from serine. Decarboxylation of free serine is the major source of ethanolamine production in plants and ethanolamine metabolism is crucial for the synthesis of choline, phosphatidylethanolamine (PE) and phosphatidylcholine (PC), and thus for plant growth. The protein is Serine decarboxylase 2 of Oryza sativa subsp. japonica (Rice).